A 438-amino-acid chain; its full sequence is Flotillin-2 (438 aa).

It belongs to the band 7/mec-2 family. Flotillin subfamily. In terms of assembly, heterooligomeric complex of flotillins 1 and 2.

Its subcellular location is the membrane. Its function is as follows. May play a role in axon growth and regeneration. May be involved in epidermal cell adhesion and epidermal structure and function. This Drosophila melanogaster (Fruit fly) protein is Flotillin-2.